The following is a 333-amino-acid chain: Nucleoid-associated protein (333 aa).

Belongs to the YejK family.

The protein localises to the cytoplasm. Its subcellular location is the nucleoid. This chain is Nucleoid-associated protein, found in Metapseudomonas resinovorans (Pseudomonas resinovorans).